The sequence spans 66 residues: Metallothionein-like protein type 3 (66 aa).

This sequence belongs to the metallothionein superfamily. Type 15 family.

In terms of biological role, metallothioneins have a high content of cysteine residues that bind various heavy metals. This Malus domestica (Apple) protein is Metallothionein-like protein type 3 (MT2).